The sequence spans 504 residues: Dolichol kinase sec59 (504 aa).

Residues 1–55 (MYIMSKKCYDTSEKIDREQECVEVNYQHRNFESILEIFSVLFIPFLCNSGKKFLQ) are Cytoplasmic-facing. A helical membrane pass occupies residues 56 to 76 (ISNASFFLPACFYLLGSSSII). Residue glutamine 77 is a topological domain, lumenal. Residues 78–98 (LYEPLLWLSSFPFCILYVGFG) traverse the membrane as a helical segment. Residues 99-157 (ENSVLYHEMYTVCLYNALLSLTQRWKWLSIVLDGLGNSSVNLKLHETVILAFLEITQNS) are Cytoplasmic-facing. The helical transmembrane segment at 158 to 178 (FTFIEGILICTGLTGLCFATF) threads the bilayer. The Lumenal segment spans residues 179 to 187 (SYEVSPVVS). Residues 188-208 (VLSGVLLISLPTLILLNLCIL) form a helical membrane-spanning segment. The Cytoplasmic segment spans residues 209–215 (KLAAKLH). The chain crosses the membrane as a helical span at residues 216–236 (LSALFTTCLIYFFSALLVFLV). At 237–263 (SRSWVAGQLGQAPEVWLFNQIFSHRNS) the chain is on the lumenal side. A helical transmembrane segment spans residues 264–284 (LTRIKIIIWWIICLGCFIFIL). The Cytoplasmic portion of the chain corresponds to 285–325 (LRSNRNNPLGKYFTTEDEVLNFRRKTYHALVVFLFLPVCCL). Residues 326–347 (DPHFLHLSFSGVLFIFLFVEGI) traverse the membrane as a helical segment. Over 348 to 373 (RILRLKPFGKMIHEFLWEYTDNRDHK) the chain is Lumenal. The helical transmembrane segment at 374–394 (GPLIISHIYLLIGCAIPIWLS) threads the bilayer. Over 395–403 (NALKGPVAS) the chain is Cytoplasmic. The chain crosses the membrane as a helical span at residues 404-424 (VELLVGVLCLGCGDSMASIIG). Over 425 to 440 (KRFGKHRISKTNKSIE) the chain is Lumenal. A helical transmembrane segment spans residues 441–461 (GVFAFSISVFLVLHLTQAFHV). Cysteine 462 is a topological domain (cytoplasmic). Residues 463–483 (PSVTFWKTLFMSLCTAILEGV) form a helical membrane-spanning segment. At 484-504 (STENDNLILPMYMWVLYQALD) the chain is on the lumenal side.

This sequence belongs to the polyprenol kinase family.

It is found in the endoplasmic reticulum membrane. It carries out the reaction a di-trans,poly-cis-dolichol + CTP = a di-trans,poly-cis-dolichyl phosphate + CDP + H(+). Its pathway is protein modification; protein glycosylation. Catalyzes CTP-mediated phosphorylation of dolichol, the terminal step in de novo dolichyl monophosphate (Dol-P) biosynthesis. Dol-P is a lipid carrier essential for the synthesis of N-linked and O-linked oligosaccharides and for GPI anchors. The sequence is that of Dolichol kinase sec59 from Schizosaccharomyces pombe (strain 972 / ATCC 24843) (Fission yeast).